We begin with the raw amino-acid sequence, 242 residues long: Platinum sensitivity protein 3 (242 aa).

Component of the SHU complex composed of at least CSM2, PSY3, SHU1 and SHU2.

It is found in the nucleus. Its function is as follows. Required for resistance to the DNA-damaging agents methyl methanesulfonate (MMS), cisplatin and oxaliplatin, but not to mitomycin C. Plays a role in protection against mutation accumulation. May be a component of the recombination-repair pathway. The chain is Platinum sensitivity protein 3 (PSY3) from Saccharomyces cerevisiae (strain ATCC 204508 / S288c) (Baker's yeast).